Consider the following 476-residue polypeptide: Methylenetetrahydrofolate--tRNA-(uracil-5-)-methyltransferase TrmFO (476 aa).

14–19 (GGGLAG) lines the FAD pocket. The disordered stretch occupies residues 428 to 447 (LTEPPTHGADGKKLRGPEKS). A compositionally biased stretch (basic and acidic residues) spans 436 to 447 (ADGKKLRGPEKS).

It belongs to the MnmG family. TrmFO subfamily. FAD is required as a cofactor.

It is found in the cytoplasm. It catalyses the reaction uridine(54) in tRNA + (6R)-5,10-methylene-5,6,7,8-tetrahydrofolate + NADH + H(+) = 5-methyluridine(54) in tRNA + (6S)-5,6,7,8-tetrahydrofolate + NAD(+). The enzyme catalyses uridine(54) in tRNA + (6R)-5,10-methylene-5,6,7,8-tetrahydrofolate + NADPH + H(+) = 5-methyluridine(54) in tRNA + (6S)-5,6,7,8-tetrahydrofolate + NADP(+). Catalyzes the folate-dependent formation of 5-methyl-uridine at position 54 (M-5-U54) in all tRNAs. This chain is Methylenetetrahydrofolate--tRNA-(uracil-5-)-methyltransferase TrmFO, found in Rhodopseudomonas palustris (strain BisA53).